Here is a 479-residue protein sequence, read N- to C-terminus: Aspartyl/glutamyl-tRNA(Asn/Gln) amidotransferase subunit B (479 aa).

It belongs to the GatB/GatE family. GatB subfamily. Heterotrimer of A, B and C subunits.

The enzyme catalyses L-glutamyl-tRNA(Gln) + L-glutamine + ATP + H2O = L-glutaminyl-tRNA(Gln) + L-glutamate + ADP + phosphate + H(+). It catalyses the reaction L-aspartyl-tRNA(Asn) + L-glutamine + ATP + H2O = L-asparaginyl-tRNA(Asn) + L-glutamate + ADP + phosphate + 2 H(+). Functionally, allows the formation of correctly charged Asn-tRNA(Asn) or Gln-tRNA(Gln) through the transamidation of misacylated Asp-tRNA(Asn) or Glu-tRNA(Gln) in organisms which lack either or both of asparaginyl-tRNA or glutaminyl-tRNA synthetases. The reaction takes place in the presence of glutamine and ATP through an activated phospho-Asp-tRNA(Asn) or phospho-Glu-tRNA(Gln). The sequence is that of Aspartyl/glutamyl-tRNA(Asn/Gln) amidotransferase subunit B from Geobacter sulfurreducens (strain ATCC 51573 / DSM 12127 / PCA).